The following is a 111-amino-acid chain: WAP four-disulfide core domain protein 12 (111 aa).

Residues 1 to 23 (MGSSSFLVLMVSLALVTLVVVEG) form the signal peptide. Positions 27–74 (GIEKAGVCPADNVRCFKSNPPQCHTDQDCLGERKCCYLHCGFKCVIPV) constitute a WAP domain. 4 cysteine pairs are disulfide-bonded: Cys-34-Cys-62, Cys-41-Cys-66, Cys-49-Cys-61, and Cys-55-Cys-70. The disordered stretch occupies residues 80–111 (GGNKDEDVSGPHPEPGWEAKSPGSSSTGCPQI). The segment covering 101–111 (PGSSSTGCPQI) has biased composition (polar residues).

It localises to the secreted. Antibacterial protein. Putative acid-stable proteinase inhibitor. This chain is WAP four-disulfide core domain protein 12 (WFDC12), found in Colobus guereza (Mantled guereza).